The chain runs to 358 residues: Glutamine synthetase (358 aa).

Positions valine 25–glycine 104 constitute a GS beta-grasp domain. The 248-residue stretch at tyrosine 111 to asparagine 358 folds into the GS catalytic domain.

This sequence belongs to the glutamine synthetase family. In terms of assembly, homooctamer.

The protein resides in the cytoplasm. It catalyses the reaction L-glutamate + NH4(+) + ATP = L-glutamine + ADP + phosphate + H(+). The chain is Glutamine synthetase (GLN1) from Cryptococcus neoformans var. neoformans serotype D (strain B-3501A) (Filobasidiella neoformans).